Consider the following 1423-residue polypeptide: uncharacterized protein (1423 aa).

Residues Met-1–Ser-28 form the signal peptide. Over Ala-29–Thr-1321 the chain is Extracellular. N-linked (GlcNAc...) asparagine glycosylation is found at Asn-94, Asn-306, Asn-355, Asn-483, Asn-666, and Asn-903. In terms of domain architecture, NIDO spans Ser-184–Val-347. Residues Val-638–Arg-818 form the AMOP domain. A helical transmembrane segment spans residues Trp-1322–Cys-1342. The Cytoplasmic portion of the chain corresponds to Cys-1343–Val-1423. Positions Ser-1364–Tyr-1401 are disordered. Positions Pro-1378–Tyr-1401 are enriched in basic and acidic residues.

It localises to the membrane. This is an uncharacterized protein from Caenorhabditis elegans.